Reading from the N-terminus, the 396-residue chain is dTDP-epi-vancosaminyltransferase (396 aa).

10 to 12 serves as a coordination point for dTDP-beta-L-4-epi-vancosamine; that stretch reads SRG. Devancoaminyl-vancomycin contacts are provided by Asp-127, Gln-133, Tyr-141, and Tyr-169. Residues Arg-207, Ser-230, 277-278, and 293-298 each bind dTDP-beta-L-4-epi-vancosamine; these read EV and HDSAGT.

This sequence belongs to the glycosyltransferase 28 family.

The catalysed reaction is dTDP-beta-L-4-epi-vancosamine + devancoaminyl-vancomycin = chloroorienticin B + dTDP + H(+). Its pathway is antibiotic biosynthesis; vancomycin biosynthesis. Catalyzes the attachment of 4-epi-vancosamine from a TDP donor to the beta-OH-Tyr-6 of the aglycone cosubstrate in the biosynthesis of glycopeptide antibiotic chloroeremomycin, a member of the vancomycin group of antibiotics. Strongly prefers devancoaminyl-vancomycin (DVV) as substrate rather than the heptapeptide vancomycin aglycone (AGV). Acts downstream of GtfB. This chain is dTDP-epi-vancosaminyltransferase (gtfA), found in Amycolatopsis orientalis (Nocardia orientalis).